The primary structure comprises 434 residues: Zinc finger protein kipf (434 aa).

Residues 7–88 form the ZAD domain; that stretch reads NVCRTCMDET…EQSYQHFFRV (82 aa). Residues cysteine 9, cysteine 12, cysteine 61, and cysteine 64 each contribute to the Zn(2+) site. The tract at residues 117–173 is disordered; that stretch reads QLKSDRQQDTQQMTKTQKPDDDLSQKQTLQAKLQEGNIDGPPESFTLHPRKRTCRTE. The C2H2-type 1; degenerate zinc finger occupies 197 to 219; sequence YNCPHCSKRFCSQTQLRTHITDL. 3 C2H2-type zinc fingers span residues 221–243, 249–271, and 277–299; these read NRCP…LRNH, HKCF…LRTH, and LSCS…RREH. Residues 295 to 328 form a disordered region; sequence HRREHKQRPGSSKSESTKDPDSDDSDQAQDLKPK. Phosphoserine is present on residues serine 316 and serine 319. 3 consecutive C2H2-type zinc fingers follow at residues 348 to 370, 377 to 399, and 404 to 427; these read PICD…MLTH, KKCT…ERGH, and FRCE…KRIH.

Homodimer; mediated by the ZAD domain. Interacts (via C2H2 type zinc finger 4) with rhi/rhino (via Chromo domain). Dimerization is required for association with DNA and interaction with rhi/rhino. Primarily expressed in ovaries and absent from testes. In ovaries very low levels in germline stem cells and cystoblasts but abundant in developing cysts and polyploid nurse cells.

The protein resides in the nucleus. It localises to the chromosome. Functionally, DNA-binding zinc finger protein that recruits chromo domain protein rhino/rhi to specific chromatin regions enriched in H3K9me2/3 histone methylation, mediating piRNA (piwi-interacting RNA) biogenesis. May bind to GC rich DNA sequences including a 5'-GRGGN-3' sequence motif. Nucleates rhi/rhino accumulation and stabilizes its expansion. Involved in piRNA transposon repression, particularly in the female ovary during oogenesis. The chain is Zinc finger protein kipf from Drosophila melanogaster (Fruit fly).